Consider the following 190-residue polypeptide: Proline-rich protein 3 (190 aa).

Disordered regions lie at residues 1 to 94 (MPKR…GLGP), 110 to 130 (PPFP…KEAR), and 142 to 161 (KNTY…SDRP). Residues 37-48 (MGPPSLLGPPPM) show a composition bias toward pro residues. Residues 157-185 (KSDRPVCRHFSKKGHCRYEDHCAFYHPGV) form a C3H1-type zinc finger.

The protein is Proline-rich protein 3 (Prr3) of Mus musculus (Mouse).